The primary structure comprises 320 residues: ATP-dependent 6-phosphofructokinase (320 aa).

Gly12 contributes to the ATP binding site. Position 22–26 (22–26 (RGVVR)) interacts with ADP. ATP is bound by residues 73-74 (RF) and 103-106 (GDGS). Asp104 is a binding site for Mg(2+). Position 126–128 (126–128 (TID)) interacts with substrate. Catalysis depends on Asp128, which acts as the Proton acceptor. Residue Arg155 participates in ADP binding. Residues Arg163 and 170-172 (MGR) contribute to the substrate site. ADP is bound by residues 186 to 188 (GCE), Lys212, and 214 to 216 (KKH). Residues Glu223, Arg244, and 250–253 (HIQR) each bind substrate.

It belongs to the phosphofructokinase type A (PFKA) family. ATP-dependent PFK group I subfamily. Prokaryotic clade 'B1' sub-subfamily. Homotetramer. The cofactor is Mg(2+).

The protein resides in the cytoplasm. The catalysed reaction is beta-D-fructose 6-phosphate + ATP = beta-D-fructose 1,6-bisphosphate + ADP + H(+). The protein operates within carbohydrate degradation; glycolysis; D-glyceraldehyde 3-phosphate and glycerone phosphate from D-glucose: step 3/4. With respect to regulation, allosterically activated by ADP and other diphosphonucleosides, and allosterically inhibited by phosphoenolpyruvate. Its function is as follows. Catalyzes the phosphorylation of D-fructose 6-phosphate to fructose 1,6-bisphosphate by ATP, the first committing step of glycolysis. The protein is ATP-dependent 6-phosphofructokinase of Vibrio parahaemolyticus serotype O3:K6 (strain RIMD 2210633).